Reading from the N-terminus, the 287-residue chain is Diaminopimelate epimerase (287 aa).

Positions 13, 46, and 66 each coordinate substrate. Residue cysteine 75 is the Proton donor of the active site. Substrate contacts are provided by residues 76-77, asparagine 166, asparagine 199, and 217-218; these read GN and ER. Catalysis depends on cysteine 226, which acts as the Proton acceptor. 227-228 serves as a coordination point for substrate; it reads GT.

The protein belongs to the diaminopimelate epimerase family. In terms of assembly, homodimer.

It localises to the cytoplasm. It catalyses the reaction (2S,6S)-2,6-diaminopimelate = meso-2,6-diaminopimelate. Its pathway is amino-acid biosynthesis; L-lysine biosynthesis via DAP pathway; DL-2,6-diaminopimelate from LL-2,6-diaminopimelate: step 1/1. Its function is as follows. Catalyzes the stereoinversion of LL-2,6-diaminopimelate (L,L-DAP) to meso-diaminopimelate (meso-DAP), a precursor of L-lysine and an essential component of the bacterial peptidoglycan. This chain is Diaminopimelate epimerase, found in Paraburkholderia xenovorans (strain LB400).